A 616-amino-acid polypeptide reads, in one-letter code: Dihydroxy-acid dehydratase (616 aa).

Residue Asp-81 coordinates Mg(2+). Position 122 (Cys-122) interacts with [2Fe-2S] cluster. Mg(2+) is bound by residues Asp-123 and Lys-124. The residue at position 124 (Lys-124) is an N6-carboxylysine. Position 195 (Cys-195) interacts with [2Fe-2S] cluster. Glu-491 serves as a coordination point for Mg(2+). Ser-517 functions as the Proton acceptor in the catalytic mechanism.

The protein belongs to the IlvD/Edd family. As to quaternary structure, homodimer. It depends on [2Fe-2S] cluster as a cofactor. The cofactor is Mg(2+).

It catalyses the reaction (2R)-2,3-dihydroxy-3-methylbutanoate = 3-methyl-2-oxobutanoate + H2O. The enzyme catalyses (2R,3R)-2,3-dihydroxy-3-methylpentanoate = (S)-3-methyl-2-oxopentanoate + H2O. Its pathway is amino-acid biosynthesis; L-isoleucine biosynthesis; L-isoleucine from 2-oxobutanoate: step 3/4. The protein operates within amino-acid biosynthesis; L-valine biosynthesis; L-valine from pyruvate: step 3/4. Functionally, functions in the biosynthesis of branched-chain amino acids. Catalyzes the dehydration of (2R,3R)-2,3-dihydroxy-3-methylpentanoate (2,3-dihydroxy-3-methylvalerate) into 2-oxo-3-methylpentanoate (2-oxo-3-methylvalerate) and of (2R)-2,3-dihydroxy-3-methylbutanoate (2,3-dihydroxyisovalerate) into 2-oxo-3-methylbutanoate (2-oxoisovalerate), the penultimate precursor to L-isoleucine and L-valine, respectively. The protein is Dihydroxy-acid dehydratase of Yersinia enterocolitica serotype O:8 / biotype 1B (strain NCTC 13174 / 8081).